An 893-amino-acid polypeptide reads, in one-letter code: Phosphatidate phosphatase LPIN2 (893 aa).

An N-LIP region spans residues 1–108 (MNYVGQLAGQ…LPAYLATSPI (108 aa)). A Phosphoserine modification is found at S106. The disordered stretch occupies residues 122-216 (LVKSSGNERP…EDYKEPSLFH (95 aa)). Polar residues predominate over residues 123 to 151 (VKSSGNERPAQSSDVSHTLESEAVFTQSS). The span at 152–162 (VKKKKRRRKKC) shows a compositional bias: basic residues. The Nuclear localization signal signature appears at 153–158 (KKKKRR). 3 positions are modified to phosphoserine: S174, S186, and S187. A compositionally biased stretch (basic and acidic residues) spans 204–213 (LKEEDYKEPS). Phosphoserine is present on residues S243 and S303. Disordered stretches follow at residues 357-400 (LLDA…PDDI) and 417-456 (FPKS…TECL). Residues 360 to 371 (ADPVPSPSAEAP) are compositionally biased toward low complexity. Residues 384-393 (KKKGVHKRSQ) show a composition bias toward basic residues. The span at 423–445 (DPGSRQWPESDTFSGSQSPQSVG) shows a compositional bias: polar residues. S563 bears the Phosphoserine mark. A disordered region spans residues 568–611 (LPETKEGKSEVPPANDLPSNAEEPTSARPAENDTSSDEGSQELE). The segment covering 601 to 611 (TSSDEGSQELE) has biased composition (acidic residues). Residues 632-834 (YKKSLRLSSD…RIFTVNPKGE (203 aa)) are C-LIP. The DXDXT motif signature appears at 686-690 (DIDGT). An LXXIL motif motif is present at residues 697–701 (LGQIL).

The protein belongs to the lipin family. Mg(2+) is required as a cofactor. Expressed at high level in liver and to some extend in lung, kidney, placenta, spleen, thymus, lymph node, prostate, testes, small intestine, and colon. Expressed also in circulating red blood cells and site of lymphopoiesis.

Its subcellular location is the nucleus. The protein localises to the cytoplasm. The protein resides in the cytosol. It localises to the endoplasmic reticulum membrane. It carries out the reaction a 1,2-diacyl-sn-glycero-3-phosphate + H2O = a 1,2-diacyl-sn-glycerol + phosphate. Its activity is regulated as follows. Inhibited by N-ethylmaleimide. Functionally, acts as a magnesium-dependent phosphatidate phosphatase enzyme which catalyzes the conversion of phosphatidic acid to diacylglycerol during triglyceride, phosphatidylcholine and phosphatidylethanolamine biosynthesis in the endoplasmic reticulum membrane. Plays important roles in controlling the metabolism of fatty acids at different levels. Also acts as a nuclear transcriptional coactivator for PPARGC1A to modulate lipid metabolism. This is Phosphatidate phosphatase LPIN2 from Mus musculus (Mouse).